Reading from the N-terminus, the 190-residue chain is Hypoxanthine/guanine phosphoribosyltransferase (190 aa).

This sequence belongs to the purine/pyrimidine phosphoribosyltransferase family. Archaeal HPRT subfamily. As to quaternary structure, homodimer.

The protein resides in the cytoplasm. The enzyme catalyses IMP + diphosphate = hypoxanthine + 5-phospho-alpha-D-ribose 1-diphosphate. The catalysed reaction is GMP + diphosphate = guanine + 5-phospho-alpha-D-ribose 1-diphosphate. The protein operates within purine metabolism; IMP biosynthesis via salvage pathway; IMP from hypoxanthine: step 1/1. Its function is as follows. Catalyzes a salvage reaction resulting in the formation of IMP that is energically less costly than de novo synthesis. This is Hypoxanthine/guanine phosphoribosyltransferase from Methanobacterium lacus (strain AL-21).